Reading from the N-terminus, the 244-residue chain is Salivary antigen-5 (244 aa).

The signal sequence occupies residues 1–23 (MAKAHSSLVFCLLALALVRFAQA). Residues 46-202 (LDFHNKFREL…WYTGYLVCNY (157 aa)) enclose the SCP domain. N-linked (GlcNAc...) asparagine glycosylation is found at N106 and N172.

This sequence belongs to the CRISP family. Venom allergen 5-like subfamily. Salivary gland (at protein level).

The protein resides in the secreted. In terms of biological role, inhibits host platelet aggregation induced by low doses of collagen. This Triatoma infestans (Assassin bug) protein is Salivary antigen-5.